We begin with the raw amino-acid sequence, 639 residues long: ATP-dependent zinc metalloprotease FtsH (639 aa).

Over methionine 1–threonine 4 the chain is Cytoplasmic. The chain crosses the membrane as a helical span at residues valine 5–phenylalanine 25. Residues glutamine 26 to tryptophan 104 are Periplasmic-facing. A helical membrane pass occupies residues tryptophan 105–isoleucine 125. Residues arginine 126–alanine 639 are Cytoplasmic-facing. ATP is bound at residue glycine 196 to threonine 203. A Zn(2+)-binding site is contributed by histidine 418. The active site involves glutamate 419. The Zn(2+) site is built by histidine 422 and aspartate 494. The segment at lysine 597 to alanine 639 is disordered.

The protein in the central section; belongs to the AAA ATPase family. In the C-terminal section; belongs to the peptidase M41 family. In terms of assembly, homohexamer. It depends on Zn(2+) as a cofactor.

It localises to the cell inner membrane. In terms of biological role, acts as a processive, ATP-dependent zinc metallopeptidase for both cytoplasmic and membrane proteins. Plays a role in the quality control of integral membrane proteins. In Acidobacterium capsulatum (strain ATCC 51196 / DSM 11244 / BCRC 80197 / JCM 7670 / NBRC 15755 / NCIMB 13165 / 161), this protein is ATP-dependent zinc metalloprotease FtsH.